A 107-amino-acid polypeptide reads, in one-letter code: Putative antitoxin VapB5 (107 aa).

The next 2 membrane-spanning stretches (helical) occupy residues glycine 3 to alanine 23 and leucine 65 to tyrosine 85.

The protein localises to the cell membrane. Its function is as follows. Possibly the antitoxin component of a type II toxin-antitoxin (TA) system. Its cognate toxin is VapC5 (Potential). This chain is Putative antitoxin VapB5 (vapB5), found in Methanocaldococcus jannaschii (strain ATCC 43067 / DSM 2661 / JAL-1 / JCM 10045 / NBRC 100440) (Methanococcus jannaschii).